A 126-amino-acid polypeptide reads, in one-letter code: RuBisCO chaperone RbcX (126 aa).

This sequence belongs to the RbcX family. As to quaternary structure, homodimer. Interacts with the exposed C-terminal peptide of RbcL via its central cleft, contacts a second RbcL monomer via its peripheral polar surface.

It is found in the carboxysome. Its subcellular location is the cytoplasm. In terms of biological role, an RbcL-specific chaperone. Required for assembly of the RbcL8 core. The central cleft of the RbcX homodimer (RbcX2) binds the C-terminus of a RbcL monomer, stabilizing the C-terminus and probably preventing its reassociation with chaperonin GroEL-ES. At the same time the peripheral region of RbcX2 binds a second RbcL monomer, bridging the RbcL homodimers in the correct orientation. The RbcX2(2)-bound RbcL dimers then assemble into the RbcL8 core (RbcL8-(RbcX2)8). RbcS binding triggers the release of RbcX2. The sequence is that of RuBisCO chaperone RbcX from Thermosynechococcus vestitus (strain NIES-2133 / IAM M-273 / BP-1).